A 158-amino-acid polypeptide reads, in one-letter code: MKKKNNIILTIQKNCKNTKNIPKKYIFEKWIKKVLYKKKNVNLINIRIVDEREMKNINLKYRGKNKSTNILSFKFDLFINKNQTLLGDLVLCKKIIEKESLKYQKTLESRWAHMIIHGTLHLLGYDHKNKKEKKIMEKIENKIMLFLNYEKPYFMKSS.

Zn(2+) is bound by residues His117, His121, and His127.

This sequence belongs to the endoribonuclease YbeY family. Zn(2+) is required as a cofactor.

It is found in the cytoplasm. Single strand-specific metallo-endoribonuclease involved in late-stage 70S ribosome quality control and in maturation of the 3' terminus of the 16S rRNA. The chain is Endoribonuclease YbeY from Buchnera aphidicola subsp. Schizaphis graminum (strain Sg).